We begin with the raw amino-acid sequence, 205 residues long: Large ribosomal subunit protein uL4 (205 aa).

The tract at residues 54–78 (GDISGTTAKPHRQKHTGRARQGSLR) is disordered. A compositionally biased stretch (basic residues) spans 62 to 71 (KPHRQKHTGR).

It belongs to the universal ribosomal protein uL4 family. Part of the 50S ribosomal subunit.

Its function is as follows. One of the primary rRNA binding proteins, this protein initially binds near the 5'-end of the 23S rRNA. It is important during the early stages of 50S assembly. It makes multiple contacts with different domains of the 23S rRNA in the assembled 50S subunit and ribosome. Functionally, forms part of the polypeptide exit tunnel. This chain is Large ribosomal subunit protein uL4, found in Ehrlichia chaffeensis (strain ATCC CRL-10679 / Arkansas).